The following is a 483-amino-acid chain: Glutamate--tRNA ligase (483 aa).

The 'HIGH' region motif lies at 11-21; sequence PSPTGHLHIGN. Residues 252–256 carry the 'KMSKS' region motif; the sequence is KLSKR. Position 255 (Lys255) interacts with ATP.

Belongs to the class-I aminoacyl-tRNA synthetase family. Glutamate--tRNA ligase type 1 subfamily. In terms of assembly, monomer.

The protein resides in the cytoplasm. It catalyses the reaction tRNA(Glu) + L-glutamate + ATP = L-glutamyl-tRNA(Glu) + AMP + diphosphate. Functionally, catalyzes the attachment of glutamate to tRNA(Glu) in a two-step reaction: glutamate is first activated by ATP to form Glu-AMP and then transferred to the acceptor end of tRNA(Glu). This Bacillus velezensis (strain DSM 23117 / BGSC 10A6 / LMG 26770 / FZB42) (Bacillus amyloliquefaciens subsp. plantarum) protein is Glutamate--tRNA ligase.